We begin with the raw amino-acid sequence, 682 residues long: Methionine--tRNA ligase (682 aa).

Residues 15 to 25 (PYANGAIHLGH) carry the 'HIGH' region motif. Residues C146, C149, C159, and C162 each contribute to the Zn(2+) site. A 'KMSKS' region motif is present at residues 331-335 (KMSKS). K334 contributes to the ATP binding site. The region spanning 580 to 682 (DFAKLDMRVA…SGVTAGMQVK (103 aa)) is the tRNA-binding domain.

The protein belongs to the class-I aminoacyl-tRNA synthetase family. MetG type 1 subfamily. As to quaternary structure, homodimer. Requires Zn(2+) as cofactor.

It is found in the cytoplasm. The enzyme catalyses tRNA(Met) + L-methionine + ATP = L-methionyl-tRNA(Met) + AMP + diphosphate. Functionally, is required not only for elongation of protein synthesis but also for the initiation of all mRNA translation through initiator tRNA(fMet) aminoacylation. In Haemophilus influenzae (strain ATCC 51907 / DSM 11121 / KW20 / Rd), this protein is Methionine--tRNA ligase.